The chain runs to 501 residues: Glutamyl-tRNA(Gln) amidotransferase subunit A (501 aa).

Residues lysine 84 and serine 159 each act as charge relay system in the active site. The Acyl-ester intermediate role is filled by serine 183.

Belongs to the amidase family. GatA subfamily. Heterotrimer of A, B and C subunits.

It carries out the reaction L-glutamyl-tRNA(Gln) + L-glutamine + ATP + H2O = L-glutaminyl-tRNA(Gln) + L-glutamate + ADP + phosphate + H(+). Its function is as follows. Allows the formation of correctly charged Gln-tRNA(Gln) through the transamidation of misacylated Glu-tRNA(Gln) in organisms which lack glutaminyl-tRNA synthetase. The reaction takes place in the presence of glutamine and ATP through an activated gamma-phospho-Glu-tRNA(Gln). In Streptomyces avermitilis (strain ATCC 31267 / DSM 46492 / JCM 5070 / NBRC 14893 / NCIMB 12804 / NRRL 8165 / MA-4680), this protein is Glutamyl-tRNA(Gln) amidotransferase subunit A.